The sequence spans 308 residues: Uricase-2 isozyme 1 (308 aa).

Residues lysine 17 and threonine 63 each act as charge relay system in the active site. 7 residues coordinate urate: threonine 63, aspartate 64, phenylalanine 165, arginine 182, valine 237, glutamine 238, and asparagine 264. Residue histidine 266 is the Charge relay system of the active site. Positions 306-308 (SKL) match the Microbody targeting signal motif.

Belongs to the uricase family.

Its subcellular location is the peroxisome. The catalysed reaction is urate + O2 + H2O = 5-hydroxyisourate + H2O2. Its pathway is purine metabolism; urate degradation; (S)-allantoin from urate: step 1/3. Functionally, catalyzes the oxidation of uric acid to 5-hydroxyisourate, which is further processed to form (S)-allantoin. This Canavalia lineata (Beach bean) protein is Uricase-2 isozyme 1.